The sequence spans 368 residues: Glutamate 5-kinase (368 aa).

Residue K10 participates in ATP binding. Residues S50, D137, and N149 each coordinate substrate. An ATP-binding site is contributed by 169-170 (TD). Positions 276 to 354 (RGTLVLDDGA…ESIVRELGYM (79 aa)) constitute a PUA domain.

This sequence belongs to the glutamate 5-kinase family.

The protein localises to the cytoplasm. The catalysed reaction is L-glutamate + ATP = L-glutamyl 5-phosphate + ADP. Its pathway is amino-acid biosynthesis; L-proline biosynthesis; L-glutamate 5-semialdehyde from L-glutamate: step 1/2. Catalyzes the transfer of a phosphate group to glutamate to form L-glutamate 5-phosphate. In Pseudomonas savastanoi pv. phaseolicola (strain 1448A / Race 6) (Pseudomonas syringae pv. phaseolicola (strain 1448A / Race 6)), this protein is Glutamate 5-kinase.